Consider the following 2210-residue polypeptide: RNA-directed RNA polymerase L (2210 aa).

The interval 26 to 285 (KAIFLSQTKL…KCAIMSEEDS (260 aa)) is endonuclease. Residues Glu-51, Asp-88, and Glu-101 each contribute to the Mn(2+) site. The active site involves Lys-114. The RdRp catalytic domain occupies 1163–1359 (LDMKSVVRQG…FLSDKLNKFV (197 aa)). Asp-1319 provides a ligand contact to Mg(2+).

The protein belongs to the Bunyavirales RNA polymerase family. Homomultimer; the oligomeric structure is essential for the polymerase activity. Interacts with nucleoprotein N. Interacts with protein Z; this interaction inhibits viral transcription and replication, Z partially blocks the product exit tunnel for the releasing nascent RNA product. Mn(2+) is required as a cofactor. Requires Mg(2+) as cofactor.

The protein resides in the virion. Its subcellular location is the host cytoplasm. It catalyses the reaction RNA(n) + a ribonucleoside 5'-triphosphate = RNA(n+1) + diphosphate. RNA-dependent RNA polymerase, which is responsible for the replication and transcription of the viral RNA genome using antigenomic RNA as an intermediate. During transcription, synthesizes subgenomic RNAs and assures their capping by a cap-snatching mechanism, which involves the endonuclease activity cleaving the host capped pre-mRNAs. These short capped RNAs are then used as primers for viral transcription. The 3'-end of subgenomic mRNAs molecules are heterogeneous and not polyadenylated. The replicase function is to direct synthesis of antigenomic and genomic RNA which are encapsidated and non capped. As a consequence of the use of the same enzyme for both transcription and replication, these mechanisms need to be well coordinated. These processes may be regulated by proteins N and Z in a dose-dependent manner. Z protein inhibits the viral polymerase L und thus the viral transcription and RNA synthesis. In Sigmodon alstoni (PIRV), this protein is RNA-directed RNA polymerase L.